We begin with the raw amino-acid sequence, 284 residues long: Tropomyosin (284 aa).

Residues 1–284 (MDGIKKKMIA…DQTFAELTGY (284 aa)) are a coiled coil. Residues 111–131 (TKLEEASKTAEESERGRKDLE) form a disordered region.

The protein belongs to the tropomyosin family. As to quaternary structure, homodimer.

Tropomyosin, in association with the troponin complex, plays a central role in the calcium dependent regulation of muscle contraction. This chain is Tropomyosin, found in Schistosoma haematobium (Blood fluke).